Reading from the N-terminus, the 367-residue chain is MGEVKLFFGPNHPGMHGNFSVHMYVEGDTVVKARPLPGFLHRGFEKLMERRLWYQNLALIPRICVPEPDINELCYALAVEKIAKIDVPERAQWIRMIVLELARIANHLWSFSGIGGPIGLYTGSFWGTADRDRILDIFENLTGARVYHMYIVPGGVRKDLTPKIEKMILETLDYIESRLPDYEKLILKNRIVHTRLKGIAKLDRETALEMGVTGVGLRATGVPYDIRKVDPYLFYDKVDFEVPFSTDGDAFARVYLKFREIFQSIKIVKQALEKMPVGKVNTPISEGSALRFRVPKGQAYVHIESTRGEYGYYMVSDGGEKPYRVVVRGASYPQTFIGVEKYLPGTRIEDVPIWLSTMDVCAPEVDR.

It belongs to the complex I 49 kDa subunit family. NDH-1 is composed of 14 different subunits. Subunits NuoB, C, D, E, F, and G constitute the peripheral sector of the complex.

The protein resides in the cell inner membrane. It catalyses the reaction a quinone + NADH + 5 H(+)(in) = a quinol + NAD(+) + 4 H(+)(out). Its function is as follows. NDH-1 shuttles electrons from NADH, via FMN and iron-sulfur (Fe-S) centers, to quinones in the respiratory chain. The immediate electron acceptor for the enzyme in this species is believed to be ubiquinone. Couples the redox reaction to proton translocation (for every two electrons transferred, four hydrogen ions are translocated across the cytoplasmic membrane), and thus conserves the redox energy in a proton gradient. The sequence is that of NADH-quinone oxidoreductase subunit D from Thermosipho melanesiensis (strain DSM 12029 / CIP 104789 / BI429).